The chain runs to 348 residues: Ion-translocating oxidoreductase complex subunit D (348 aa).

The next 4 helical transmembrane spans lie at 23 to 43 (WVLACALPGLIAQTYFFGYGT), 44 to 64 (LIQLLLAISVAVALEAGIMLL), 72 to 91 (ALRDYSAVVTAWLLAVAIPP), and 126 to 146 (IAYVVLLISFPVQMTSWMAPI). An FMN phosphoryl threonine modification is found at Thr187. 5 helical membrane-spanning segments follow: residues 214-234 (FAGIGWEWVNIAYLLGGLILL), 243-263 (IPMAMLAGLVFTALLAQLFAP), 266-286 (TASPMIHLLSGATMLGAFFIA), 300-320 (LIYGFFIGAMVFLIRSWGGFP), and 321-341 (DGVAFAVLLANMCVPLIDYYT).

This sequence belongs to the NqrB/RnfD family. The complex is composed of six subunits: RnfA, RnfB, RnfC, RnfD, RnfE and RnfG. It depends on FMN as a cofactor.

The protein resides in the cell inner membrane. In terms of biological role, part of a membrane-bound complex that couples electron transfer with translocation of ions across the membrane. The protein is Ion-translocating oxidoreductase complex subunit D of Vibrio cholerae serotype O1 (strain ATCC 39315 / El Tor Inaba N16961).